The primary structure comprises 614 residues: MKKYDVIVIGAGHAGLEAAFATSNLNLQTALITLDEKGIGMMPCNPSIGGPAKGIVTREIDALGGIQGKAADATTMQMKILNSSKGPGVWAIRAQIDKIAYQRWFKQQIKQQKNLDLIIAEVSDLLVENNIVKGVVLSDQKIIQADYVIITTGTYLKSITHRGSVCVDEGADGTKNAKFLSDALVKLGFELIRLKTGTPARIKKDSIDFTNMILEPGTNQKIAFSHYHPVYKPYDEQLPCHIIYTNEQTHQIIRENLNKSAMYGGMISGIGPRYCPSIEDKIVKFSEKPRHQIFVEPESYELDSMYLGGFSTSMPIDVQEKMIRSLPGLENCEILKYAYAIEYDAIDPTQLYPSLESKLVNNLFFAGQINGTSGYEEAAAQGLMAAINVNQKYQNKEPVILGRDQAYIGVMIDDIVTKGVVEPYRLLTSRAEHRLALRNDNADDRLMKIGFEIGLLKPEVYDQYLNNLKQIKEILNWLKTTTVGQIDDLKFTTLKTNSYLIDYLKRPEIKLNDLLIYCPIKIEDEQIINKVQIQVKFEGYIKNQEENLKQLKRLNNIKLHAIVDYKEVPNISLETIDKLNKIKPLDLEQASRISGVNLTDIAMIKYYLERIKND.

10 to 15 (GAGHAG) lines the FAD pocket. NAD(+) is bound at residue 271–285 (GPRYCPSIEDKIVKF).

Belongs to the MnmG family. In terms of assembly, homodimer. Heterotetramer of two MnmE and two MnmG subunits. Requires FAD as cofactor.

It localises to the cytoplasm. Its function is as follows. NAD-binding protein involved in the addition of a carboxymethylaminomethyl (cmnm) group at the wobble position (U34) of certain tRNAs, forming tRNA-cmnm(5)s(2)U34. The chain is tRNA uridine 5-carboxymethylaminomethyl modification enzyme MnmG from Ureaplasma parvum serovar 3 (strain ATCC 27815 / 27 / NCTC 11736).